The sequence spans 198 residues: Small ribosomal subunit protein uS11 (198 aa).

Low complexity-rich tracts occupy residues 1 to 11 and 19 to 58; these read MSGTEAGAGEP and EAAQPEAGAPDAGTPEASAPEAGAAQPEAGTQPEAGTAQP. Disordered stretches follow at residues 1–72 and 178–198; these read MSGT…TPAD and DVTPIPHDTTRKKGGKRGRRV. Positions 187–198 are enriched in basic residues; the sequence is TRKKGGKRGRRV.

The protein belongs to the universal ribosomal protein uS11 family. Part of the 30S ribosomal subunit.

Located on the platform of the 30S subunit. In Cenarchaeum symbiosum (strain A), this protein is Small ribosomal subunit protein uS11.